A 387-amino-acid chain; its full sequence is GDSL esterase/lipase At2g23540 (387 aa).

Residues 1–32 (MATRASTSSRVSPAFTFLVIFFLLSLTASVEA) form the signal peptide. S55 serves as the catalytic Nucleophile. N139 and N159 each carry an N-linked (GlcNAc...) asparagine glycan. Catalysis depends on residues D352 and H355. Residue N380 is glycosylated (N-linked (GlcNAc...) asparagine).

Belongs to the 'GDSL' lipolytic enzyme family.

Its subcellular location is the secreted. This is GDSL esterase/lipase At2g23540 from Arabidopsis thaliana (Mouse-ear cress).